Here is a 228-residue protein sequence, read N- to C-terminus: Aspartyl protease inhibitor (228 aa).

A signal peptide spans 1–15 (MKLIELCVLCAIAFA). The span at 88 to 112 (KLKSRMSGKKEEKAAVTSTKDEDLP) shows a compositional bias: basic and acidic residues. Residues 88-119 (KLKSRMSGKKEEKAAVTSTKDEDLPKPPQKPS) form a disordered region. C134 and C224 are disulfide-bonded.

This sequence belongs to the protease inhibitor I33 family.

It localises to the secreted. Functionally, aspartyl protease inhibitor. The polypeptide is Aspartyl protease inhibitor (Trichostrongylus colubriformis (Black scour worm)).